The primary structure comprises 796 residues: Kinesin-like protein KIF3C (796 aa).

The 358-residue stretch at 10 to 367 (ALKVVARCRP…LRFANRAKNI (358 aa)) folds into the Kinesin motor domain. 97–104 (GQTGTGKT) provides a ligand contact to ATP. 3 disordered regions span residues 251 to 292 (ERQN…PKEA), 397 to 421 (EKKGMLGKRPRRKSSRRKKAVSAPA), and 754 to 796 (PSTS…VDHD). Over residues 270–284 (AGGGGGGGGTSGSGS) the composition is skewed to gly residues. Positions 378–632 (KDTLLREFQE…NEQTRELKLK (255 aa)) form a coiled coil. Residues 401 to 416 (MLGKRPRRKSSRRKKA) are compositionally biased toward basic residues. Residues 633 to 793 (YLIIENFIPP…SAPLHPATVV (161 aa)) are globular.

It belongs to the TRAFAC class myosin-kinesin ATPase superfamily. Kinesin family. Kinesin II subfamily. As to quaternary structure, heterodimer of KIF3A and KIF3C.

It localises to the cytoplasm. Its subcellular location is the cytoskeleton. Microtubule-based anterograde translocator for membranous organelles. The chain is Kinesin-like protein KIF3C (Kif3c) from Rattus norvegicus (Rat).